Here is a 954-residue protein sequence, read N- to C-terminus: Leucine--tRNA ligase (954 aa).

Residues 67 to 78 (PYPSGAGLHVGH) carry the 'HIGH' region motif. The 'KMSKS' region signature appears at 729–733 (KMGKS). An ATP-binding site is contributed by lysine 732.

The protein belongs to the class-I aminoacyl-tRNA synthetase family.

The protein resides in the cytoplasm. It carries out the reaction tRNA(Leu) + L-leucine + ATP = L-leucyl-tRNA(Leu) + AMP + diphosphate. The chain is Leucine--tRNA ligase from Salinispora tropica (strain ATCC BAA-916 / DSM 44818 / JCM 13857 / NBRC 105044 / CNB-440).